Reading from the N-terminus, the 502-residue chain is RNA polymerase sigma factor sigA (502 aa).

Residues 1 to 23 constitute a chloroplast transit peptide; it reads MATAAVIGLNTGKRLLSSSFYHS. Over residues 57 to 71 the composition is skewed to polar residues; the sequence is YSPSFPSSNRHTQSA. The interval 57–92 is disordered; the sequence is YSPSFPSSNRHTQSAKALKESVDVASTEKPWLPNGT. Threonine 170 bears the Phosphothreonine mark. A Polymerase core binding motif is present at residues 287–300; that stretch reads DLVQGGLIGLLRGI. A DNA-binding region (H-T-H motif) is located at residues 461 to 480; it reads WEDISKRIGLSRERVRQVGL.

It belongs to the sigma-70 factor family. As to quaternary structure, interacts with SIB1 in chloroplast. Binds to CSK. In terms of processing, the phosphorylation of Thr-170 mediated by oxidative conditions of plastoquinone (PQ) changes the promoter specificity, selectively inhibiting the transcription of the psaA gene, which encodes a PS-I protein. Phosphorylation of the holoenzyme occurs in the dark. This phosphorylation in response to plastoquinone redox state modification is mediated by CSK. In terms of tissue distribution, highly expressed in leaves, and to a lesser extent in roots. Expressed in old seedlings (8 days), cotyledons, hypocotyls, leaves, sepals and siliques.

It localises to the plastid. The protein resides in the chloroplast. Functionally, essential protein. Sigma factors are initiation factors that promote the attachment of plastid-encoded RNA polymerase (PEP) to specific initiation sites and are then released. Controls the transcription of the psaA gene and thus modulates photosystem stoichiometry. Thereby maintains a harmonious electron flow and photosynthetic efficiency. In Arabidopsis thaliana (Mouse-ear cress), this protein is RNA polymerase sigma factor sigA (SIGA).